Reading from the N-terminus, the 146-residue chain is Transcriptional regulator MraZ (146 aa).

2 consecutive SpoVT-AbrB domains span residues 5–48 (TSYH…TLEE) and 77–120 (ASEC…SRAK).

It belongs to the MraZ family. In terms of assembly, forms oligomers.

The protein resides in the cytoplasm. It is found in the nucleoid. The sequence is that of Transcriptional regulator MraZ from Desulfosudis oleivorans (strain DSM 6200 / JCM 39069 / Hxd3) (Desulfococcus oleovorans).